We begin with the raw amino-acid sequence, 426 residues long: Citrate synthase (426 aa).

Catalysis depends on residues His-314 and Asp-372.

Belongs to the citrate synthase family.

It catalyses the reaction oxaloacetate + acetyl-CoA + H2O = citrate + CoA + H(+). The protein operates within carbohydrate metabolism; tricarboxylic acid cycle; isocitrate from oxaloacetate: step 1/2. In Helicobacter pylori (strain J99 / ATCC 700824) (Campylobacter pylori J99), this protein is Citrate synthase (gltA).